The sequence spans 152 residues: ASP external chaperone (152 aa).

The first 22 residues, 1–22, serve as a signal peptide directing secretion; the sequence is MNKPVTLLLATLLAPLSGQLCA.

Forms a complex with the serine protease ASP in the periplasm. After translocation of the ASP-ORF2 complex from the periplasm to the extracellular space, the complex is dissociated in a pH-dependent manner.

The protein localises to the periplasm. The protein resides in the secreted. Degraded by ASP after secretion and dissociation of the ASP-ORF2 complex. Required for the production of the active form of the Aeromonas extracellular serine protease (ASP). Acts as a chaperone that helps ASP form an active structure in the periplasm. Formation of a complex with ASP in the periplasm also inactivates the protease activity and likely protects ASP from intrinsic proteases. Dissociation of the ASP-ORF2 complex after secretion in the extracellular space generates an active ASP. This is ASP external chaperone from Aeromonas sobria.